A 669-amino-acid chain; its full sequence is Probable ferric reductase transmembrane component (669 aa).

A disordered region spans residues Phe-17–Thr-86. 4 N-linked (GlcNAc...) asparagine glycosylation sites follow: Asn-20, Asn-52, Asn-64, and Asn-116. The span at Thr-28 to Thr-86 shows a compositional bias: low complexity. A helical membrane pass occupies residues Gly-122–Ile-142. An N-linked (GlcNAc...) asparagine glycan is attached at Asn-152. The next 5 membrane-spanning stretches (helical) occupy residues Ile-198–Val-218, Leu-234–Gly-254, Val-281–Gly-301, Ile-313–Phe-333, and Val-340–Leu-360. Positions Thr-239–Ile-373 constitute a Ferric oxidoreductase domain. Residues Ala-374–Ala-492 enclose the FAD-binding FR-type domain. His-437 to Thr-442 provides a ligand contact to FAD. A helical transmembrane segment spans residues Val-499–Ala-519. N-linked (GlcNAc...) asparagine glycans are attached at residues Asn-524 and Asn-653.

It belongs to the ferric reductase (FRE) family. It depends on FAD as a cofactor.

It is found in the membrane. It catalyses the reaction 2 a Fe(II)-siderophore + NAD(+) + H(+) = 2 a Fe(III)-siderophore + NADH. In Candida albicans (Yeast), this protein is Probable ferric reductase transmembrane component (CFL1).